Reading from the N-terminus, the 65-residue chain is DNA-directed RNA polymerase subunit Rpo10 (65 aa).

Residues Cys7, Cys10, Cys44, and Cys45 each coordinate Zn(2+).

It belongs to the archaeal Rpo10/eukaryotic RPB10 RNA polymerase subunit family. As to quaternary structure, part of the RNA polymerase complex. Zn(2+) serves as cofactor.

It is found in the cytoplasm. The catalysed reaction is RNA(n) + a ribonucleoside 5'-triphosphate = RNA(n+1) + diphosphate. Its function is as follows. DNA-dependent RNA polymerase (RNAP) catalyzes the transcription of DNA into RNA using the four ribonucleoside triphosphates as substrates. The chain is DNA-directed RNA polymerase subunit Rpo10 from Nanoarchaeum equitans (strain Kin4-M).